The sequence spans 309 residues: Heme A synthase (309 aa).

The Cytoplasmic portion of the chain corresponds to 1-6 (MTKKLK). A helical membrane pass occupies residues 7-27 (ILSVISTICMIPLLLGGALVT). Residues 28–62 (KTGSADGCGNSWPLCEGQFLPTKISFEMFIELSHR) lie on the Extracellular side of the membrane. Cys-35 and Cys-42 are oxidised to a cystine. Residue Glu-58 is part of the active site. His-61 contributes to the heme o binding site. Residues 63 to 83 (GVTGVVGILIVYLTYLVWKEL) form a helical membrane-spanning segment. Residues 84–88 (RHNKE) lie on the Cytoplasmic side of the membrane. A helical membrane pass occupies residues 89–109 (VVFLAFSALSLMILQALIGAA). The Extracellular segment spans residues 110 to 123 (AVVWGQSDFALATH). His-123 is a heme o binding site. Residues 124-144 (FGISLVCFAAVFLLMLQLFEI) traverse the membrane as a helical segment. Residues 145–159 (DKKLHTEDIHINKTH) lie on the Cytoplasmic side of the membrane. The helical transmembrane segment at 160-180 (RIEIYAISFYTMCVVYSGALV) threads the bilayer. Topologically, residues 181-211 (RHTDSNLACRDWPLCVNNSSFGISDYNFYQW) are extracellular. Cys-189 and Cys-195 are disulfide-bonded. Residues 212–232 (VQMGHRLAAGILFIWTVILTI) form a helical membrane-spanning segment. Residue His-216 participates in heme b binding. Residues 233–247 (RMVKHYKNSKVFYWS) lie on the Cytoplasmic side of the membrane. Residues 248 to 268 (WLITLGLITLQVLFGALIIFT) form a helical membrane-spanning segment. Residues 269–271 (SLN) are Extracellular-facing. Residues 272–292 (LAIALFHALFITCYFGMLSFF) traverse the membrane as a helical segment. His-278 contacts heme b. Residues 293-309 (MHLSFRAKRREKYSNQS) are Cytoplasmic-facing.

This sequence belongs to the COX15/CtaA family. Type 1 subfamily. As to quaternary structure, interacts with CtaB. The cofactor is heme b.

The protein localises to the cell membrane. It catalyses the reaction Fe(II)-heme o + 2 A + H2O = Fe(II)-heme a + 2 AH2. It participates in porphyrin-containing compound metabolism; heme A biosynthesis; heme A from heme O: step 1/1. Its function is as follows. Catalyzes the conversion of heme O to heme A by two successive hydroxylations of the methyl group at C8. The first hydroxylation forms heme I, the second hydroxylation results in an unstable dihydroxymethyl group, which spontaneously dehydrates, resulting in the formyl group of heme A. In Oceanobacillus iheyensis (strain DSM 14371 / CIP 107618 / JCM 11309 / KCTC 3954 / HTE831), this protein is Heme A synthase.